The sequence spans 321 residues: L-carnitine dehydrogenase (321 aa).

14-19 provides a ligand contact to NAD(+); the sequence is GSGVIG.

Belongs to the 3-hydroxyacyl-CoA dehydrogenase family. L-carnitine dehydrogenase subfamily. In terms of assembly, homodimer.

The protein localises to the cytoplasm. It catalyses the reaction carnitine + NAD(+) = 3-dehydrocarnitine + NADH + H(+). It participates in amine and polyamine metabolism; carnitine metabolism. Its activity is regulated as follows. Analogs of L-carnitine such as D-carnitine, glycine betaine and choline, are competitive inhibitors of L-carnitine oxidation. Its function is as follows. Catalyzes the NAD(+)-dependent oxidation of L-carnitine to 3-dehydrocarnitine. Is specific for L-carnitine and NAD(+) as substrates. D,L-3-hydroxybutyrate, L-lactate, ethanol, L-malate and D,L-isocitrate are not substrates. Is involved in a L-carnitine degradation pathway that allows P.aeruginosa to grow on L-carnitine as the sole source of carbon and nitrogen. The chain is L-carnitine dehydrogenase from Pseudomonas aeruginosa (strain ATCC 15692 / DSM 22644 / CIP 104116 / JCM 14847 / LMG 12228 / 1C / PRS 101 / PAO1).